Consider the following 67-residue polypeptide: Large ribosomal subunit protein uL29 (67 aa).

This sequence belongs to the universal ribosomal protein uL29 family. Part of the 50S ribosomal subunit. Contacts protein L23 and trigger factor when it is complexed with the ribosome.

Functionally, binds the 23S rRNA. One of the proteins that surrounds the polypeptide exit tunnel on the outside of the subunit. The chain is Large ribosomal subunit protein uL29 (rpmC) from Deinococcus radiodurans (strain ATCC 13939 / DSM 20539 / JCM 16871 / CCUG 27074 / LMG 4051 / NBRC 15346 / NCIMB 9279 / VKM B-1422 / R1).